The sequence spans 127 residues: Glycine cleavage system H protein (127 aa).

The Lipoyl-binding domain occupies 24-105; that stretch reads TAVVGITDFA…YNEGWIVKMK (82 aa). At K65 the chain carries N6-lipoyllysine.

The protein belongs to the GcvH family. In terms of assembly, the glycine cleavage system is composed of four proteins: P, T, L and H. It depends on (R)-lipoate as a cofactor.

The glycine cleavage system catalyzes the degradation of glycine. The H protein shuttles the methylamine group of glycine from the P protein to the T protein. This Chlorobaculum parvum (strain DSM 263 / NCIMB 8327) (Chlorobium vibrioforme subsp. thiosulfatophilum) protein is Glycine cleavage system H protein.